The chain runs to 474 residues: Bifunctional protein GlmU (474 aa).

A pyrophosphorylase region spans residues 1 to 232 (MSALDVIIMA…ALQVAGVNSP (232 aa)). Residues K23, Q78, 83–84 (GT), 105–107 (SGD), G142, E157, and N230 contribute to the UDP-N-acetyl-alpha-D-glucosamine site. Position 107 (D107) interacts with Mg(2+). N230 lines the Mg(2+) pocket. The interval 233 to 253 (LQLAELERAHQLAQARALMEQ) is linker. Positions 254-474 (GVRLADPARF…WQRPAKLPKA (221 aa)) are N-acetyltransferase. UDP-N-acetyl-alpha-D-glucosamine contacts are provided by R349 and K367. The Proton acceptor role is filled by H379. Residues Y382 and N393 each contribute to the UDP-N-acetyl-alpha-D-glucosamine site. Acetyl-CoA-binding positions include A396, 402-403 (NY), S421, G439, and R456. Residues 454–474 (VARGKQVTKENWQRPAKLPKA) are disordered.

The protein in the N-terminal section; belongs to the N-acetylglucosamine-1-phosphate uridyltransferase family. It in the C-terminal section; belongs to the transferase hexapeptide repeat family. As to quaternary structure, homotrimer. It depends on Mg(2+) as a cofactor.

It localises to the cytoplasm. It catalyses the reaction alpha-D-glucosamine 1-phosphate + acetyl-CoA = N-acetyl-alpha-D-glucosamine 1-phosphate + CoA + H(+). It carries out the reaction N-acetyl-alpha-D-glucosamine 1-phosphate + UTP + H(+) = UDP-N-acetyl-alpha-D-glucosamine + diphosphate. The protein operates within nucleotide-sugar biosynthesis; UDP-N-acetyl-alpha-D-glucosamine biosynthesis; N-acetyl-alpha-D-glucosamine 1-phosphate from alpha-D-glucosamine 6-phosphate (route II): step 2/2. Its pathway is nucleotide-sugar biosynthesis; UDP-N-acetyl-alpha-D-glucosamine biosynthesis; UDP-N-acetyl-alpha-D-glucosamine from N-acetyl-alpha-D-glucosamine 1-phosphate: step 1/1. It participates in bacterial outer membrane biogenesis; LPS lipid A biosynthesis. Catalyzes the last two sequential reactions in the de novo biosynthetic pathway for UDP-N-acetylglucosamine (UDP-GlcNAc). The C-terminal domain catalyzes the transfer of acetyl group from acetyl coenzyme A to glucosamine-1-phosphate (GlcN-1-P) to produce N-acetylglucosamine-1-phosphate (GlcNAc-1-P), which is converted into UDP-GlcNAc by the transfer of uridine 5-monophosphate (from uridine 5-triphosphate), a reaction catalyzed by the N-terminal domain. The sequence is that of Bifunctional protein GlmU from Paracidovorax citrulli (strain AAC00-1) (Acidovorax citrulli).